The chain runs to 492 residues: MEYHMEYSPNEVIKQEREVFVGKEKSGSKFKRKRSIFIVLTVSICFMFALMLFYFTRNENNKTLFTNSLSNNINDDYIINSLLKSESGKKFIVSKLEELISSYDKEKKMRTTGAEENNMNMNGIDDKDNKSVSFVNKKNGNLKVNNNNQVSYSNLFDTKFLMDNLETVNLFYIFLKENNKKYETSEEMQKRFIIFSENYRKIELHNKKTNSLYKRGMNKFGDLSPEEFRSKYLNLKTHGPFKTLSPPVSYEANYEDVIKKYKPADAKLDRIAYDWRLHGGVTPVKDQALCGSCWAFSSVGSVESQYAIRKKALFLFSEQELVDCSVKNNGCYGGYITNAFDDMIDLGGLCSQDDYPYVSNLPETCNLKRCNERYTIKSYVSIPDDKFKEALRYLGPISISIAASDDFAFYRGGFYDGECGAAPNHAVILVGYGMKDIYNEDTGRMEKFYYYIIKNSWGSDWGEGGYINLETDENGYKKTCSIGTEAYVPLLE.

Topologically, residues 1 to 35 are cytoplasmic; the sequence is MEYHMEYSPNEVIKQEREVFVGKEKSGSKFKRKRS. A propeptide spans 1–242 (activation peptide); sequence MEYHMEYSPN…LNLKTHGPFK (242 aa). The Bipartite vacuolar targeting signal 1 signature appears at 16–25; sequence EREVFVGKEK. Residues 36–56 traverse the membrane as a helical; Signal-anchor for type II membrane protein segment; that stretch reads IFIVLTVSICFMFALMLFYFT. The Lumenal portion of the chain corresponds to 57 to 492; it reads RNENNKTLFT…GTEAYVPLLE (436 aa). N-linked (GlcNAc...) asparagine glycosylation is present at Asn61. Positions 84 to 105 match the Bipartite vacuolar targeting signal 2 motif; the sequence is KSESGKKFIVSKLEELISSYDK. Residue Asn129 is glycosylated (N-linked (GlcNAc...) asparagine). The short motif at 251-268 is the Nose motif; required for the correct folding of the mature form element; sequence EANYEDVIKKYKPADAKL. Intrachain disulfides connect Cys290–Cys331, Cys324–Cys365, Cys350–Cys370, and Cys419–Cys480. Cys293 is an active-site residue. Residue His425 is part of the active site. An Arm motif; binds to host hemoglobin and required for the inhibitory interaction between the propeptide and the catalytic domain motif is present at residues 436–445; sequence DIYNEDTGRM. Asn455 is an active-site residue.

The protein belongs to the peptidase C1 family. Post-translationally, auto-cleavage occurs at acidic pH. The proenzyme is the predominant form in late trophozoites and both the pro and mature enzyme are present in schizonts.

It localises to the membrane. The protein localises to the vacuole. The protein resides in the cytoplasmic vesicle membrane. Its activity is regulated as follows. Inhibited by cysteine protease inhibitor ICP. Functionally, cysteine protease which cleaves native host hemoglobin and globin in the food vacuole during the asexual blood stage. Preferentially cleaves substrates which have an arginine at the P1 position and a leucine at the P2 position. The protein is Falcipain-3 of Plasmodium falciparum (isolate 3D7).